Here is a 151-residue protein sequence, read N- to C-terminus: Macrodomain Ter protein (151 aa).

The protein belongs to the MatP family. In terms of assembly, homodimer.

Its subcellular location is the cytoplasm. Required for spatial organization of the terminus region of the chromosome (Ter macrodomain) during the cell cycle. Prevents early segregation of duplicated Ter macrodomains during cell division. Binds specifically to matS, which is a 13 bp signature motif repeated within the Ter macrodomain. This Yersinia enterocolitica serotype O:8 / biotype 1B (strain NCTC 13174 / 8081) protein is Macrodomain Ter protein.